We begin with the raw amino-acid sequence, 332 residues long: Holliday junction branch migration complex subunit RuvB (332 aa).

Positions 1 to 181 (MSRILDNELM…FGITGHMEYY (181 aa)) are large ATPase domain (RuvB-L). Residues Leu-20, Arg-21, Gly-62, Lys-65, Thr-66, Thr-67, 128–130 (EDF), Arg-171, Tyr-181, and Arg-218 each bind ATP. Thr-66 is a Mg(2+) binding site. A small ATPAse domain (RuvB-S) region spans residues 182–252 (EAGDLTEIVE…ITDQALSMLD (71 aa)). The segment at 255-332 (QEGLDYVDQK…EHLGYEYMKE (78 aa)) is head domain (RuvB-H). DNA is bound by residues Arg-291, Arg-310, Arg-312, and Arg-315.

Belongs to the RuvB family. In terms of assembly, homohexamer. Forms an RuvA(8)-RuvB(12)-Holliday junction (HJ) complex. HJ DNA is sandwiched between 2 RuvA tetramers; dsDNA enters through RuvA and exits via RuvB. An RuvB hexamer assembles on each DNA strand where it exits the tetramer. Each RuvB hexamer is contacted by two RuvA subunits (via domain III) on 2 adjacent RuvB subunits; this complex drives branch migration. In the full resolvosome a probable DNA-RuvA(4)-RuvB(12)-RuvC(2) complex forms which resolves the HJ.

It is found in the cytoplasm. The catalysed reaction is ATP + H2O = ADP + phosphate + H(+). In terms of biological role, the RuvA-RuvB-RuvC complex processes Holliday junction (HJ) DNA during genetic recombination and DNA repair, while the RuvA-RuvB complex plays an important role in the rescue of blocked DNA replication forks via replication fork reversal (RFR). RuvA specifically binds to HJ cruciform DNA, conferring on it an open structure. The RuvB hexamer acts as an ATP-dependent pump, pulling dsDNA into and through the RuvAB complex. RuvB forms 2 homohexamers on either side of HJ DNA bound by 1 or 2 RuvA tetramers; 4 subunits per hexamer contact DNA at a time. Coordinated motions by a converter formed by DNA-disengaged RuvB subunits stimulates ATP hydrolysis and nucleotide exchange. Immobilization of the converter enables RuvB to convert the ATP-contained energy into a lever motion, pulling 2 nucleotides of DNA out of the RuvA tetramer per ATP hydrolyzed, thus driving DNA branch migration. The RuvB motors rotate together with the DNA substrate, which together with the progressing nucleotide cycle form the mechanistic basis for DNA recombination by continuous HJ branch migration. Branch migration allows RuvC to scan DNA until it finds its consensus sequence, where it cleaves and resolves cruciform DNA. The sequence is that of Holliday junction branch migration complex subunit RuvB from Streptococcus sanguinis (strain SK36).